The sequence spans 492 residues: Cytochrome P450 monooxygenase MYCFIDRAFT_204672 (492 aa).

Asn-116 carries N-linked (GlcNAc...) asparagine glycosylation. The helical transmembrane segment at 269–293 threads the bilayer; it reads FLISMIFISAANGCVVSGAMLYSIA. The N-linked (GlcNAc...) asparagine glycan is linked to Asn-335. Residue Cys-430 participates in heme binding.

Belongs to the cytochrome P450 family. The cofactor is heme.

The protein localises to the membrane. The protein operates within secondary metabolite biosynthesis. In terms of biological role, cytochrome P450 monooxygenase; part of the gene cluster that mediates the biosynthesis of an emodin derivative that may be involved in black Sigatoka disease of banana. The pathway begins with the synthesis of atrochrysone thioester by the polyketide synthase PKS8-1. The atrochrysone carboxyl ACP thioesterase MYCFIDRAFT_190111 then breaks the thioester bond and releases the atrochrysone carboxylic acid from PKS8-1. The decarboxylase MYCFIDRAFT_34057 then catalyzes the concerted decarboxylation-elimination required to convert atochrysone carboxylic acid into emodin anthrone, which is further oxidized to emodin by the anthrone oxygenase MYCFIDRAFT_34418. The functions of the other tailoring enzymes as well as the final product of the cluster have still to be identified. In Pseudocercospora fijiensis (strain CIRAD86) (Black leaf streak disease fungus), this protein is Cytochrome P450 monooxygenase MYCFIDRAFT_204672.